We begin with the raw amino-acid sequence, 116 residues long: MSYDEGGEELEEIKRRKLLEYQRALEAEKAKEEQKAREEAMRQEILRRILTPEARARLSNLKLVKPELVEALEIQLIQLAESRSVRVPIDDETLKQILARLYEAQRAREVKFRVSF.

It belongs to the PDCD5 family.

This Thermofilum pendens (strain DSM 2475 / Hrk 5) protein is DNA-binding protein Tpen_0471.